The following is a 277-amino-acid chain: 4-diphosphocytidyl-2-C-methyl-D-erythritol kinase (277 aa).

The active site involves K9. 91-101 provides a ligand contact to ATP; the sequence is PMGAGLGGGSS. D133 is an active-site residue.

It belongs to the GHMP kinase family. IspE subfamily.

It carries out the reaction 4-CDP-2-C-methyl-D-erythritol + ATP = 4-CDP-2-C-methyl-D-erythritol 2-phosphate + ADP + H(+). The protein operates within isoprenoid biosynthesis; isopentenyl diphosphate biosynthesis via DXP pathway; isopentenyl diphosphate from 1-deoxy-D-xylulose 5-phosphate: step 3/6. Catalyzes the phosphorylation of the position 2 hydroxy group of 4-diphosphocytidyl-2C-methyl-D-erythritol. The sequence is that of 4-diphosphocytidyl-2-C-methyl-D-erythritol kinase from Acinetobacter baumannii (strain AB307-0294).